The sequence spans 264 residues: S-adenosylmethionine decarboxylase proenzyme (264 aa).

The active-site Schiff-base intermediate with substrate; via pyruvic acid is serine 112. Serine 112 carries the post-translational modification Pyruvic acid (Ser); by autocatalysis. Catalysis depends on histidine 117, which acts as the Proton acceptor; for processing activity. Cysteine 140 acts as the Proton donor; for catalytic activity in catalysis.

This sequence belongs to the prokaryotic AdoMetDC family. Type 2 subfamily. In terms of assembly, heterooctamer of four alpha and four beta chains arranged as a tetramer of alpha/beta heterodimers. The cofactor is pyruvate. In terms of processing, is synthesized initially as an inactive proenzyme. Formation of the active enzyme involves a self-maturation process in which the active site pyruvoyl group is generated from an internal serine residue via an autocatalytic post-translational modification. Two non-identical subunits are generated from the proenzyme in this reaction, and the pyruvate is formed at the N-terminus of the alpha chain, which is derived from the carboxyl end of the proenzyme. The post-translation cleavage follows an unusual pathway, termed non-hydrolytic serinolysis, in which the side chain hydroxyl group of the serine supplies its oxygen atom to form the C-terminus of the beta chain, while the remainder of the serine residue undergoes an oxidative deamination to produce ammonia and the pyruvoyl group blocking the N-terminus of the alpha chain.

The enzyme catalyses S-adenosyl-L-methionine + H(+) = S-adenosyl 3-(methylsulfanyl)propylamine + CO2. It participates in amine and polyamine biosynthesis; S-adenosylmethioninamine biosynthesis; S-adenosylmethioninamine from S-adenosyl-L-methionine: step 1/1. Its function is as follows. Catalyzes the decarboxylation of S-adenosylmethionine to S-adenosylmethioninamine (dcAdoMet), the propylamine donor required for the synthesis of the polyamines spermine and spermidine from the diamine putrescine. The polypeptide is S-adenosylmethionine decarboxylase proenzyme (Citrobacter koseri (strain ATCC BAA-895 / CDC 4225-83 / SGSC4696)).